Here is a 234-residue protein sequence, read N- to C-terminus: Large ribosomal subunit protein uL1 (234 aa).

This sequence belongs to the universal ribosomal protein uL1 family. In terms of assembly, part of the 50S ribosomal subunit.

Its function is as follows. Binds directly to 23S rRNA. The L1 stalk is quite mobile in the ribosome, and is involved in E site tRNA release. Functionally, protein L1 is also a translational repressor protein, it controls the translation of the L11 operon by binding to its mRNA. This is Large ribosomal subunit protein uL1 from Klebsiella pneumoniae subsp. pneumoniae (strain ATCC 700721 / MGH 78578).